Here is a 1399-residue protein sequence, read N- to C-terminus: Alpha-glucan water dikinase 1, chloroplastic (1399 aa).

The N-terminal 75 residues, 1-75 (MSNSVVHNLL…GRPLSFVPRA (75 aa)), are a transit peptide targeting the chloroplast. Val-76 carries the N-acetylvaline modification. Positions 265 to 306 (LLKKDNSNESPKSNGTSSSGREEKKKVSKQPERKKNYNTDKI) are disordered. Over residues 272-283 (NESPKSNGTSSS) the composition is skewed to polar residues. Residues 284 to 306 (GREEKKKVSKQPERKKNYNTDKI) show a composition bias toward basic and acidic residues. His-1004 acts as the Tele-phosphohistidine intermediate in catalysis.

Belongs to the PEP-utilizing enzyme family. As to quaternary structure, homodimer. The cofactor is Mg(2+).

The protein localises to the plastid. The protein resides in the chloroplast. It carries out the reaction [(1-&gt;4)-alpha-D-glucosyl](n) + n ATP + n H2O = [(1-&gt;4)-6-phospho-alpha-D-glucosyl](n) + n AMP + n phosphate + 2n H(+). Mediates the incorporation of phosphate into starch-like alpha-glucan, mostly at the C-6 position of glucose units. Acts as an overall regulator of starch mobilization. Required for starch degradation, suggesting that the phosphate content of starch regulates its degradability. The protein is Alpha-glucan water dikinase 1, chloroplastic of Arabidopsis thaliana (Mouse-ear cress).